Consider the following 236-residue polypeptide: Enolase-phosphatase E1 (236 aa).

It belongs to the HAD-like hydrolase superfamily. MasA/MtnC family. As to quaternary structure, monomer. It depends on Mg(2+) as a cofactor.

It catalyses the reaction 5-methylsulfanyl-2,3-dioxopentyl phosphate + H2O = 1,2-dihydroxy-5-(methylsulfanyl)pent-1-en-3-one + phosphate. It participates in amino-acid biosynthesis; L-methionine biosynthesis via salvage pathway; L-methionine from S-methyl-5-thio-alpha-D-ribose 1-phosphate: step 3/6. The protein operates within amino-acid biosynthesis; L-methionine biosynthesis via salvage pathway; L-methionine from S-methyl-5-thio-alpha-D-ribose 1-phosphate: step 4/6. Bifunctional enzyme that catalyzes the enolization of 2,3-diketo-5-methylthiopentyl-1-phosphate (DK-MTP-1-P) into the intermediate 2-hydroxy-3-keto-5-methylthiopentenyl-1-phosphate (HK-MTPenyl-1-P), which is then dephosphorylated to form the acireductone 1,2-dihydroxy-3-keto-5-methylthiopentene (DHK-MTPene). In Frankia alni (strain DSM 45986 / CECT 9034 / ACN14a), this protein is Enolase-phosphatase E1.